The chain runs to 740 residues: Ion-translocating oxidoreductase complex subunit C (740 aa).

4Fe-4S ferredoxin-type domains follow at residues 369-397 (GEPQ…QQLY) and 407-436 (KATT…VQYF). Residues cysteine 377, cysteine 380, cysteine 383, cysteine 387, cysteine 416, cysteine 419, cysteine 422, and cysteine 426 each coordinate [4Fe-4S] cluster. Disordered stretches follow at residues 602–652 (KLEQ…DPRK), 664–685 (ARKL…PRKA), and 695–714 (KARK…QVDP). Residues 605-615 (QQQANAEPEQQ) show a composition bias toward low complexity.

This sequence belongs to the 4Fe4S bacterial-type ferredoxin family. RnfC subfamily. The complex is composed of six subunits: RsxA, RsxB, RsxC, RsxD, RsxE and RsxG. It depends on [4Fe-4S] cluster as a cofactor.

The protein resides in the cell inner membrane. In terms of biological role, part of a membrane-bound complex that couples electron transfer with translocation of ions across the membrane. Required to maintain the reduced state of SoxR. The protein is Ion-translocating oxidoreductase complex subunit C of Escherichia coli O157:H7.